Consider the following 525-residue polypeptide: Glutamate--cysteine ligase (525 aa).

Belongs to the glutamate--cysteine ligase type 1 family. Type 1 subfamily.

The enzyme catalyses L-cysteine + L-glutamate + ATP = gamma-L-glutamyl-L-cysteine + ADP + phosphate + H(+). It functions in the pathway sulfur metabolism; glutathione biosynthesis; glutathione from L-cysteine and L-glutamate: step 1/2. This is Glutamate--cysteine ligase from Vibrio vulnificus (strain CMCP6).